Reading from the N-terminus, the 356-residue chain is Cyanide hydratase (356 aa).

The region spanning 8 to 287 is the CN hydrolase domain; that stretch reads YKAAAVNAEP…EGLLFVDIDL (280 aa). The active-site Proton acceptor is the glutamate 48. Residue lysine 130 is part of the active site. The active-site Nucleophile is cysteine 165.

It belongs to the carbon-nitrogen hydrolase superfamily. Nitrilase family. Oligomer of dimers, forming left-handed helical fibers.

The catalysed reaction is formamide = hydrogen cyanide + H2O. Catalyzes the hydration of cyanide to formamide. Degradation of cyanide may be important for plant pathogenic fungi in infection of cyanogenic plants. Can also transform some nitriles like 2-cyanopyridine and fumaronitrile. The sequence is that of Cyanide hydratase from Aspergillus niger.